Consider the following 362-residue polypeptide: Phospho-2-dehydro-3-deoxyheptonate aldolase (362 aa).

It belongs to the class-I DAHP synthase family.

The enzyme catalyses D-erythrose 4-phosphate + phosphoenolpyruvate + H2O = 7-phospho-2-dehydro-3-deoxy-D-arabino-heptonate + phosphate. It functions in the pathway metabolic intermediate biosynthesis; chorismate biosynthesis; chorismate from D-erythrose 4-phosphate and phosphoenolpyruvate: step 1/7. Its function is as follows. Stereospecific condensation of phosphoenolpyruvate (PEP) and D-erythrose-4-phosphate (E4P) giving rise to 3-deoxy-D-arabino-heptulosonate-7-phosphate (DAHP). This Haemophilus influenzae (strain ATCC 51907 / DSM 11121 / KW20 / Rd) protein is Phospho-2-dehydro-3-deoxyheptonate aldolase (aroG).